Here is a 417-residue protein sequence, read N- to C-terminus: D-galactonate dehydratase family member RspA (417 aa).

Gln-43 and His-127 together coordinate substrate. Catalysis depends on Tyr-158, which acts as the Proton donor/acceptor. Asp-223 is a binding site for Mg(2+). His-225 functions as the Proton donor/acceptor in the catalytic mechanism. The Mg(2+) site is built by Glu-249 and Glu-275. Glu-275, Arg-296, His-325, Asp-329, and Glu-352 together coordinate substrate.

This sequence belongs to the mandelate racemase/muconate lactonizing enzyme family. GalD subfamily. The cofactor is Mg(2+).

The catalysed reaction is D-gluconate = 2-dehydro-3-deoxy-D-gluconate + H2O. Its function is as follows. Has low D-gluconate dehydratase activity (in vitro), suggesting that it has no significant role in D-gluconate degradation in vivo. Has no detectable activity with a panel of 70 other acid sugars (in vitro). The protein is D-galactonate dehydratase family member RspA (rspA) of Pantoea ananatis (strain LMG 20103).